The following is a 403-amino-acid chain: Putative gustatory receptor 98b (403 aa).

At 1–11 (MVAQKSRLLAR) the chain is on the cytoplasmic side. A helical transmembrane segment spans residues 12–32 (AFPYLDIFSVFALTPPPQSFG). Topologically, residues 33–48 (HTPHRRLRWYLMTGYV) are extracellular. The chain crosses the membrane as a helical span at residues 49 to 69 (FYATAILATVFIVSYFNIIAI). Topologically, residues 70-83 (DEEVLEYNVSDFTR) are cytoplasmic. The chain crosses the membrane as a helical span at residues 84-104 (VMGNIQKSLYSIMAIANHLNM). Residues 105-144 (LINYRRLGGIYKDIADLEMDMDEASQCFGGQRQRFSFRFR) lie on the Extracellular side of the membrane. The helical transmembrane segment at 145–165 (MALCVGVWMILMVGSMPRLTM) threads the bilayer. Residues 166–191 (TAMGPFVSTLLKILTEFVMIMQQLKS) lie on the Cytoplasmic side of the membrane. The chain crosses the membrane as a helical span at residues 192–212 (LEYCVFVLIIYELVLRLRRTL). Topologically, residues 213–259 (SQLQEEFQDCEQQDMLQALCVALKRNQLLLGRIWRLEGDVGSYFTPT) are extracellular. A helical membrane pass occupies residues 260–280 (MLLLFLYNGLTILHMVNWAYI). Over 281 to 365 (NKFLYDSCCQ…LRFTCGGLFD (85 aa)) the chain is Cytoplasmic. A helical membrane pass occupies residues 366–386 (INLKYFGGLLVTIFGYIIILI). Residues 387–403 (QFKVQAIAANRYKKVVN) are Extracellular-facing.

It belongs to the insect chemoreceptor superfamily. Gustatory receptor (GR) family. Gr2a subfamily.

The protein localises to the cell membrane. Probable gustatory receptor which mediates acceptance or avoidance behavior, depending on its substrates. The chain is Putative gustatory receptor 98b (Gr98b) from Drosophila melanogaster (Fruit fly).